Consider the following 512-residue polypeptide: MEEFKGYLQKGGFKQQHFLYPLLFQEYIYGLAHDQGLNVNASTFNEPPEISGYGNKYSSLLVKRLIIRIYQQNSFLYSVNNSKQNRFVGHNKNYYYKMICEGFSIVVEIPFSLRLVSSIKETKEIMKFQNLRSIHSLFPFLEDKFSHLNSVSDIVIPYPIHLEILLQILQCWIQDVPTLHLLRLIFYDYHNRSNSITPNKSSYGFSKDNPRLYRFLYNSYVVECESIFYFLRKSSSYLRSTSFRPLLERTHFYGKMKHIGVTCCNDFQKTLWLFKDPFMHYVRYQGKCIIASKGTHLLMKKWKSYFVNLWQCHFHFWSQPSRIHINQFPHFSFYFLGYLSSVPINLSSAKSQMLENAFLIDTFTPKFETMISIIPMIGSLAKAKFCNLSGNPISKPAWAELSDSDIIDRFGRIYRNLSHYYSGSSKKQSLYRIKYILRLSCARTLARKHKSTVRAFLQRLGSEFFEEFFMEEEKVLSLILPRTYYPLHQLSREPIWYLDIIRINDLVNHFDL.

It belongs to the intron maturase 2 family. MatK subfamily.

Its subcellular location is the plastid. The protein localises to the chloroplast. Usually encoded in the trnK tRNA gene intron. Probably assists in splicing its own and other chloroplast group II introns. This Lemna gibba (Swollen duckweed) protein is Maturase K.